A 122-amino-acid chain; its full sequence is Large ribosomal subunit protein uL14c (122 aa).

This sequence belongs to the universal ribosomal protein uL14 family. As to quaternary structure, part of the 50S ribosomal subunit.

The protein resides in the plastid. The protein localises to the chloroplast. In terms of biological role, binds to 23S rRNA. This Gnetum parvifolium (Small-leaved jointfir) protein is Large ribosomal subunit protein uL14c.